Consider the following 585-residue polypeptide: Switch-associated protein 70 (585 aa).

Residues 210–306 form the PH domain; sequence DVLKQGYMMK…WIQAIYSTIH (97 aa). Positions 316 to 529 form a coiled coil; the sequence is HKEARQRRKE…VKKKLEMATH (214 aa). The segment at 347 to 373 is disordered; sequence ANENKQQELESVRKKLEEAASRAADEE. Residues 351–373 are compositionally biased toward basic and acidic residues; sequence KQQELESVRKKLEEAASRAADEE.

The SWAP complex consists of NPM1, NCL, PARP1 and SWAP70. In terms of processing, tyrosine-phosphorylated. Spleen. Expressed only in B-cells that have been induced to switch to various Ig isotypes.

The protein localises to the cytoplasm. It localises to the cell membrane. Its subcellular location is the nucleus. It is found in the cell projection. The protein resides in the lamellipodium. The protein localises to the cytoskeleton. Its function is as follows. Phosphatidylinositol 3,4,5-trisphosphate-dependent guanine nucleotide exchange factor (GEF) which, independently of RAS, transduces signals from tyrosine kinase receptors to RAC. It also mediates signaling of membrane ruffling. Regulates the actin cytoskeleton as an effector or adapter protein in response to agonist stimulated phosphatidylinositol (3,4)-bisphosphate production and cell protrusion. This chain is Switch-associated protein 70 (Swap70), found in Mus musculus (Mouse).